The primary structure comprises 104 residues: L-rhamnose mutarotase (104 aa).

Residue tyrosine 18 coordinates substrate. The active-site Proton donor is histidine 22. Residues tyrosine 41 and 76 to 77 each bind substrate; that span reads WW.

This sequence belongs to the rhamnose mutarotase family. As to quaternary structure, homodimer.

It is found in the cytoplasm. It carries out the reaction alpha-L-rhamnose = beta-L-rhamnose. The protein operates within carbohydrate metabolism; L-rhamnose metabolism. Functionally, involved in the anomeric conversion of L-rhamnose. In Lactiplantibacillus plantarum (strain ATCC BAA-793 / NCIMB 8826 / WCFS1) (Lactobacillus plantarum), this protein is L-rhamnose mutarotase.